A 254-amino-acid chain; its full sequence is Type III pantothenate kinase (254 aa).

Residue 6 to 13 (DVGNTNTV) participates in ATP binding. Residues Y100 and 107–110 (GADR) contribute to the substrate site. D109 functions as the Proton acceptor in the catalytic mechanism. D129 is a K(+) binding site. Position 132 (T132) interacts with ATP. T184 contributes to the substrate binding site.

The protein belongs to the type III pantothenate kinase family. In terms of assembly, homodimer. The cofactor is NH4(+). K(+) is required as a cofactor.

The protein localises to the cytoplasm. It catalyses the reaction (R)-pantothenate + ATP = (R)-4'-phosphopantothenate + ADP + H(+). It participates in cofactor biosynthesis; coenzyme A biosynthesis; CoA from (R)-pantothenate: step 1/5. Its function is as follows. Catalyzes the phosphorylation of pantothenate (Pan), the first step in CoA biosynthesis. The chain is Type III pantothenate kinase from Anaeromyxobacter sp. (strain Fw109-5).